The chain runs to 193 residues: Ion-translocating oxidoreductase complex subunit A (193 aa).

6 helical membrane-spanning segments follow: residues 5–25 (ILLI…FLGL), 39–59 (IGMG…AYLV), 72–92 (LRTL…EMVI), 102–122 (LLGI…VALL), 134–154 (VIYG…FAAL), and 171–191 (SIAL…SGLV).

It belongs to the NqrDE/RnfAE family. The complex is composed of six subunits: RnfA, RnfB, RnfC, RnfD, RnfE and RnfG.

The protein resides in the cell inner membrane. In terms of biological role, part of a membrane-bound complex that couples electron transfer with translocation of ions across the membrane. The chain is Ion-translocating oxidoreductase complex subunit A from Histophilus somni (strain 129Pt) (Haemophilus somnus).